A 429-amino-acid polypeptide reads, in one-letter code: Adenylosuccinate synthetase (429 aa).

GTP contacts are provided by residues 12–18 (GDEGKGK) and 40–42 (GHT). The active-site Proton acceptor is the D13. Mg(2+) contacts are provided by D13 and G40. IMP is bound by residues 13–16 (DEGK), 38–41 (NAGH), T128, R142, Q223, T238, and R302. H41 acts as the Proton donor in catalysis. Residue 298 to 304 (TVTGRPR) coordinates substrate. Residues R304, 330–332 (LLD), and 412–414 (SVG) each bind GTP.

This sequence belongs to the adenylosuccinate synthetase family. In terms of assembly, homodimer. Requires Mg(2+) as cofactor.

Its subcellular location is the cytoplasm. It catalyses the reaction IMP + L-aspartate + GTP = N(6)-(1,2-dicarboxyethyl)-AMP + GDP + phosphate + 2 H(+). Its pathway is purine metabolism; AMP biosynthesis via de novo pathway; AMP from IMP: step 1/2. Its function is as follows. Plays an important role in the de novo pathway of purine nucleotide biosynthesis. Catalyzes the first committed step in the biosynthesis of AMP from IMP. This Lactobacillus johnsonii (strain CNCM I-12250 / La1 / NCC 533) protein is Adenylosuccinate synthetase.